A 101-amino-acid chain; its full sequence is Cell division protein FtsB (101 aa).

Topologically, residues 1-3 (MRI) are cytoplasmic. A helical membrane pass occupies residues 4-21 (VIYSMLVLLIAIQYPLWL). The Periplasmic portion of the chain corresponds to 22-101 (GKGGWLKVYE…KSSDTQVTKQ (80 aa)). Residues 33–53 (ERQVELQEAKNSLLALRNAKL) adopt a coiled-coil conformation.

It belongs to the FtsB family. In terms of assembly, part of a complex composed of FtsB, FtsL and FtsQ.

The protein resides in the cell inner membrane. Its function is as follows. Essential cell division protein. May link together the upstream cell division proteins, which are predominantly cytoplasmic, with the downstream cell division proteins, which are predominantly periplasmic. The protein is Cell division protein FtsB of Polynucleobacter necessarius subsp. necessarius (strain STIR1).